Reading from the N-terminus, the 180-residue chain is 4-hydroxy-3-methylbut-2-enyl diphosphate reductase (180 aa).

Residue Cys-12 coordinates [4Fe-4S] cluster. Positions 41 and 74 each coordinate (2E)-4-hydroxy-3-methylbut-2-enyl diphosphate. Dimethylallyl diphosphate contacts are provided by His-41 and His-74. Residues His-41 and His-74 each coordinate isopentenyl diphosphate. Position 96 (Cys-96) interacts with [4Fe-4S] cluster. His-124 is a (2E)-4-hydroxy-3-methylbut-2-enyl diphosphate binding site. His-124 is a binding site for dimethylallyl diphosphate. His-124 contacts isopentenyl diphosphate. Glu-126 serves as the catalytic Proton donor. Thr-168 contributes to the (2E)-4-hydroxy-3-methylbut-2-enyl diphosphate binding site.

Belongs to the IspH family. Requires [4Fe-4S] cluster as cofactor.

The catalysed reaction is isopentenyl diphosphate + 2 oxidized [2Fe-2S]-[ferredoxin] + H2O = (2E)-4-hydroxy-3-methylbut-2-enyl diphosphate + 2 reduced [2Fe-2S]-[ferredoxin] + 2 H(+). It carries out the reaction dimethylallyl diphosphate + 2 oxidized [2Fe-2S]-[ferredoxin] + H2O = (2E)-4-hydroxy-3-methylbut-2-enyl diphosphate + 2 reduced [2Fe-2S]-[ferredoxin] + 2 H(+). It participates in isoprenoid biosynthesis; dimethylallyl diphosphate biosynthesis; dimethylallyl diphosphate from (2E)-4-hydroxy-3-methylbutenyl diphosphate: step 1/1. The protein operates within isoprenoid biosynthesis; isopentenyl diphosphate biosynthesis via DXP pathway; isopentenyl diphosphate from 1-deoxy-D-xylulose 5-phosphate: step 6/6. Catalyzes the conversion of 1-hydroxy-2-methyl-2-(E)-butenyl 4-diphosphate (HMBPP) into a mixture of isopentenyl diphosphate (IPP) and dimethylallyl diphosphate (DMAPP). Acts in the terminal step of the DOXP/MEP pathway for isoprenoid precursor biosynthesis. The protein is 4-hydroxy-3-methylbut-2-enyl diphosphate reductase of Pseudomonas fluorescens.